A 600-amino-acid chain; its full sequence is Kelch-like protein 24 (600 aa).

A BTB domain is found at 66–133 (TDVIICVEGK…VYTGKVKITT (68 aa)). Residues 168 to 270 (CLGIQRFADT…HPNYFVQTVE (103 aa)) enclose the BACK domain. Kelch repeat units follow at residues 314–363 (VIVV…ALRN), 365–407 (ILVS…VLLG), 408–454 (KVYV…SCVG), 456–502 (LFVI…SLNN), 504–544 (IYVA…VCNG), and 546–592 (IYIL…TIHR).

In terms of assembly, forms homodimers. Interacts with GRIK2. Component of the BCR(KLHL24) E3 ubiquitin ligase complex, composed of CUL3, RBX1 and KLHL24. Interacts with CUL3. Interacts with KRT14. Autoubiquitinated. Autoubiquitination leads to proteasomal degradation and is necessary to control KLHL24 levels. As to expression, expressed in the skin. Found in keratinocytes, dermal fibroblasts, and melanocytes. Basal-layer keratinocytes have lower KLHL24 expression than suprabasal keratinocytes. Expressed in the brain, spinal cord, liver, testis, heart and at higher levels in the skeletal muscle.

Its subcellular location is the perikaryon. It localises to the cell projection. The protein resides in the axon. It is found in the cytoplasm. The protein localises to the cell junction. Its subcellular location is the desmosome. It localises to the adherens junction. Its function is as follows. Necessary to maintain the balance between intermediate filament stability and degradation, a process that is essential for skin integrity. As part of the BCR(KLHL24) E3 ubiquitin ligase complex, mediates ubiquitination of KRT14 and controls its levels during keratinocytes differentiation. Specifically reduces kainate receptor-mediated currents in hippocampal neurons, most probably by modulating channel properties. Has a crucial role in cardiac development and function. This chain is Kelch-like protein 24 (KLHL24), found in Homo sapiens (Human).